Here is a 498-residue protein sequence, read N- to C-terminus: Type II secretion system protein E (498 aa).

Zn(2+)-binding residues include Cys-394, Cys-397, Cys-425, and Cys-428.

It belongs to the GSP E family. Forms homooligomers; most probably hexamers. Interacts with OutL/GspL. Zn(2+) is required as a cofactor.

The protein resides in the cell inner membrane. The enzyme catalyses ATP + H2O + cellular proteinSide 1 = ADP + phosphate + cellular proteinSide 2.. In terms of biological role, ATPase component of the type II secretion system required for the energy-dependent secretion of extracellular factors such as proteases and toxins from the periplasm. Acts as a molecular motor to provide the energy that is required for assembly of the pseudopilus and the extrusion of substrates generated in the cytoplasm. The polypeptide is Type II secretion system protein E (outE) (Dickeya dadantii (strain 3937) (Erwinia chrysanthemi (strain 3937))).